The sequence spans 229 residues: Endonuclease V (229 aa).

Residues Asp43 and Asp111 each contribute to the Mg(2+) site.

The protein belongs to the endonuclease V family. Requires Mg(2+) as cofactor.

The protein localises to the cytoplasm. The catalysed reaction is Endonucleolytic cleavage at apurinic or apyrimidinic sites to products with a 5'-phosphate.. Its function is as follows. DNA repair enzyme involved in the repair of deaminated bases. Selectively cleaves double-stranded DNA at the second phosphodiester bond 3' to a deoxyinosine leaving behind the intact lesion on the nicked DNA. The chain is Endonuclease V from Rippkaea orientalis (strain PCC 8801 / RF-1) (Cyanothece sp. (strain PCC 8801)).